Here is a 245-residue protein sequence, read N- to C-terminus: Complement C1q subcomponent subunit C (245 aa).

The signal sequence occupies residues 1 to 28 (MDVGPSSLPHLGLKLLLLLLLLPLRGQA). One can recognise a Collagen-like domain in the interval 31–112 (GCYGIPGMPG…GIPGEPGEEG (82 aa)). 6 positions are modified to 4-hydroxyproline: Pro-36, Pro-39, Pro-42, Pro-45, Pro-54, and Pro-63. Residues 45–113 (PGKDGYDGLP…IPGEPGEEGR (69 aa)) form a disordered region. The span at 54–71 (PGPKGEPGIPAIPGIRGP) shows a compositional bias: low complexity. At Lys-75 the chain carries 5-hydroxylysine. Lys-75 carries O-linked (Gal...) hydroxylysine glycosylation. Residues Pro-81, Pro-93, Pro-96, Pro-99, and Pro-105 each carry the 4-hydroxyproline modification. The segment covering 90 to 99 (MGPPGMPGVP) has biased composition (pro residues). The C1q domain maps to 115–245 (KQKFQSVFTV…VFSGFLLFPD (131 aa)). Cys-179 and Cys-193 are oxidised to a cystine.

In terms of assembly, core component of the complement C1 complex, a calcium-dependent complex composed of 1 molecule of the C1Q subcomplex, 2 molecules of C1R and 2 molecules of C1S. The C1Q subcomplex is composed 18 subunits: 3 chains of C1QA, C1QB, and C1QC trimerize to form 6 collagen-like triple helices connected to six globular ligand-recognition modules (C1q domain). O-linked glycans consist of Glc-Gal disaccharides bound to the oxygen atom of post-translationally added hydroxyl groups.

It localises to the secreted. The protein localises to the cell surface. Its activity is regulated as follows. The C1Q subcomplex is inhibited by sulfated molecules, such as triterpenoid sulfates, heparan sulfate, or chondroitin sulfates. Functionally, core component of the complement C1 complex, a multiprotein complex that initiates the classical pathway of the complement system, a cascade of proteins that leads to phagocytosis and breakdown of pathogens and signaling that strengthens the adaptive immune system. The classical complement pathway is initiated by the C1Q subcomplex of the C1 complex, which specifically binds IgG or IgM immunoglobulins complexed with antigens, forming antigen-antibody complexes on the surface of pathogens: C1QA, together with C1QB and C1QC, specifically recognizes and binds the Fc regions of IgG or IgM via its C1q domain. Immunoglobulin-binding activates the proenzyme C1R, which cleaves C1S, initiating the proteolytic cascade of the complement system. The C1Q subcomplex is activated by a hexamer of IgG complexed with antigens, while it is activated by a pentameric IgM. The C1Q subcomplex also recognizes and binds phosphatidylserine exposed on the surface of cells undergoing programmed cell death, possibly promoting activation of the complement system. The chain is Complement C1q subcomponent subunit C from Homo sapiens (Human).